Here is a 444-residue protein sequence, read N- to C-terminus: Deoxyguanosinetriphosphate triphosphohydrolase-like protein (444 aa).

In terms of domain architecture, HD spans 59-250; it reads RLTHSLEVSQ…MELADDIAYA (192 aa).

Belongs to the dGTPase family. Type 2 subfamily.

This chain is Deoxyguanosinetriphosphate triphosphohydrolase-like protein, found in Shewanella halifaxensis (strain HAW-EB4).